Consider the following 211-residue polypeptide: Endonuclease III (211 aa).

One can recognise a HhH domain in the interval 111–130 (AHALESLPGVGHKTANVVLN). Positions 190, 197, 200, and 206 each coordinate [4Fe-4S] cluster.

This sequence belongs to the Nth/MutY family. [4Fe-4S] cluster serves as cofactor.

The catalysed reaction is 2'-deoxyribonucleotide-(2'-deoxyribose 5'-phosphate)-2'-deoxyribonucleotide-DNA = a 3'-end 2'-deoxyribonucleotide-(2,3-dehydro-2,3-deoxyribose 5'-phosphate)-DNA + a 5'-end 5'-phospho-2'-deoxyribonucleoside-DNA + H(+). In terms of biological role, DNA repair enzyme that has both DNA N-glycosylase activity and AP-lyase activity. The DNA N-glycosylase activity releases various damaged pyrimidines from DNA by cleaving the N-glycosidic bond, leaving an AP (apurinic/apyrimidinic) site. The AP-lyase activity cleaves the phosphodiester bond 3' to the AP site by a beta-elimination, leaving a 3'-terminal unsaturated sugar and a product with a terminal 5'-phosphate. This Treponema pallidum (strain Nichols) protein is Endonuclease III.